Consider the following 305-residue polypeptide: Protoheme IX farnesyltransferase (305 aa).

9 helical membrane passes run 31–51, 52–72, 96–118, 123–145, 151–171, 179–199, 225–245, 247–267, and 281–301; these read VMSL…YSVH, PFIA…AGAI, VIES…FFMA, LLAS…IWLK, NIVI…AAVS, IILF…LALF, ILIY…IGMN, FIYL…AGSL, and FAYS…TNTI.

This sequence belongs to the UbiA prenyltransferase family. Protoheme IX farnesyltransferase subfamily.

Its subcellular location is the cell membrane. It carries out the reaction heme b + (2E,6E)-farnesyl diphosphate + H2O = Fe(II)-heme o + diphosphate. It functions in the pathway porphyrin-containing compound metabolism; heme O biosynthesis; heme O from protoheme: step 1/1. Its function is as follows. Converts heme B (protoheme IX) to heme O by substitution of the vinyl group on carbon 2 of heme B porphyrin ring with a hydroxyethyl farnesyl side group. This is Protoheme IX farnesyltransferase from Rickettsia africae (strain ESF-5).